A 132-amino-acid chain; its full sequence is Small ribosomal subunit protein uS8 (132 aa).

Belongs to the universal ribosomal protein uS8 family. In terms of assembly, part of the 30S ribosomal subunit. Contacts proteins S5 and S12.

One of the primary rRNA binding proteins, it binds directly to 16S rRNA central domain where it helps coordinate assembly of the platform of the 30S subunit. The polypeptide is Small ribosomal subunit protein uS8 (Pediococcus pentosaceus (strain ATCC 25745 / CCUG 21536 / LMG 10740 / 183-1w)).